The following is a 150-amino-acid chain: UPF0178 protein Reut_B5138 (150 aa).

Belongs to the UPF0178 family.

This Cupriavidus pinatubonensis (strain JMP 134 / LMG 1197) (Cupriavidus necator (strain JMP 134)) protein is UPF0178 protein Reut_B5138.